The sequence spans 1755 residues: Transposon Ty1-JR2 Gag-Pol polyprotein (1755 aa).

Over residues 1 to 16 the composition is skewed to low complexity; that stretch reads MESQQLSQHSHISHGS. 3 disordered regions span residues 1–93, 126–173, and 352–421; these read MESQ…MMTQ, PQSQ…RPPP, and GSRN…SKST. 3 stretches are compositionally biased toward polar residues: residues 48 to 60, 71 to 93, and 127 to 152; these read TKAN…TPAS, SPQT…MMTQ, and QSQF…GNTF. Residues 153–165 are compositionally biased toward low complexity; sequence TDSSSADSDMTST. Residues 299–401 are RNA-binding; the sequence is NNGIHINNKV…NSKSKTARAH (103 aa). Low complexity predominate over residues 402–418; the sequence is NVSTSNNSPSTDNDSIS. Position 416 is a phosphoserine (serine 416). Aspartate 461 serves as the catalytic For protease activity; shared with dimeric partner. The interval 583 to 640 is integrase-type zinc finger-like; it reads NVHTSESTRKYPYPFIHRMLAHANAQTIRYSLKNNTITYFNESDVDWSSAIDYQCPDC. One can recognise an Integrase catalytic domain in the interval 660-835; that stretch reads NSYEPFQYLH…AGLDISTLLP (176 aa). Residues aspartate 671 and aspartate 736 each coordinate Mg(2+). Disordered stretches follow at residues 956–1087, 1092–1111, and 1130–1186; these read SKAV…ETEK, RSPS…NIVP, and DLPL…EDNE. Over residues 960–969 the composition is skewed to low complexity; sequence SPTDSTPPST. Residues 1005–1015 are compositionally biased toward polar residues; it reads STPQISNIEST. Residues 1038–1053 are compositionally biased toward basic and acidic residues; the sequence is ESSHASKSKDFRHSDS. 2 stretches are compositionally biased toward polar residues: residues 1054–1082 and 1101–1111; these read YSEN…QISD and PENNSSHNIVP. Residues 1178-1212 carry the Bipartite nuclear localization signal motif; that stretch reads KKRSLEDNETEIKVSRDTWNTKNMRSLEPPRSKKR. Residues 1338 to 1476 enclose the Reverse transcriptase Ty1/copia-type domain; that stretch reads NNYYITQLDI…DILGLEIKYQ (139 aa). Mg(2+) is bound by residues aspartate 1346, aspartate 1427, aspartate 1428, aspartate 1610, glutamate 1652, and aspartate 1685. Residues 1610 to 1752 enclose the RNase H Ty1/copia-type domain; that stretch reads DASYGNQPYY…IKTFKLLTNK (143 aa).

The capsid protein forms a homotrimer, from which the VLPs are assembled. The protease is a homodimer, whose active site consists of two apposed aspartic acid residues. In terms of processing, initially, virus-like particles (VLPs) are composed of the structural unprocessed proteins Gag and Gag-Pol, and also contain the host initiator methionine tRNA (tRNA(i)-Met) which serves as a primer for minus-strand DNA synthesis, and a dimer of genomic Ty RNA. Processing of the polyproteins occurs within the particle and proceeds by an ordered pathway, called maturation. First, the protease (PR) is released by autocatalytic cleavage of the Gag-Pol polyprotein yielding capsid protein p45 and a Pol-p154 precursor protein. This cleavage is a prerequisite for subsequent processing of Pol-p154 at the remaining sites to release the mature structural and catalytic proteins. Maturation takes place prior to the RT reaction and is required to produce transposition-competent VLPs.

It localises to the cytoplasm. The protein resides in the nucleus. The enzyme catalyses DNA(n) + a 2'-deoxyribonucleoside 5'-triphosphate = DNA(n+1) + diphosphate. It carries out the reaction Endonucleolytic cleavage to 5'-phosphomonoester.. In terms of biological role, capsid protein (CA) is the structural component of the virus-like particle (VLP), forming the shell that encapsulates the retrotransposons dimeric RNA genome. The particles are assembled from trimer-clustered units and there are holes in the capsid shells that allow for the diffusion of macromolecules. CA also has nucleocapsid-like chaperone activity, promoting primer tRNA(i)-Met annealing to the multipartite primer-binding site (PBS), dimerization of Ty1 RNA and initiation of reverse transcription. The aspartyl protease (PR) mediates the proteolytic cleavages of the Gag and Gag-Pol polyproteins after assembly of the VLP. Its function is as follows. Reverse transcriptase/ribonuclease H (RT) is a multifunctional enzyme that catalyzes the conversion of the retro-elements RNA genome into dsDNA within the VLP. The enzyme displays a DNA polymerase activity that can copy either DNA or RNA templates, and a ribonuclease H (RNase H) activity that cleaves the RNA strand of RNA-DNA heteroduplexes during plus-strand synthesis and hydrolyzes RNA primers. The conversion leads to a linear dsDNA copy of the retrotransposon that includes long terminal repeats (LTRs) at both ends. Functionally, integrase (IN) targets the VLP to the nucleus, where a subparticle preintegration complex (PIC) containing at least integrase and the newly synthesized dsDNA copy of the retrotransposon must transit the nuclear membrane. Once in the nucleus, integrase performs the integration of the dsDNA into the host genome. This Saccharomyces cerevisiae (strain ATCC 204508 / S288c) (Baker's yeast) protein is Transposon Ty1-JR2 Gag-Pol polyprotein (TY1B-JR2).